Consider the following 370-residue polypeptide: MNVAAKYRMASLYVGDLHADVTEDLLFRKFSTVGPVLSIRICRDQVTRRSLGYAYVNFLQLADAQKALDTMNFDIIKGKSIRLMWSQRDAYLRRSGIGNVFIKNLDKSIDNKTLYEHFSAFGKILSSKVMSDDQGSKGYAFVHFQNQSAADRAIEEMNGKLLKGCKVFVGRFKNRKDREAELRSKASEFTNVYIKNFGGDMDDERLKDVFSKYGKTLSVKVMTDSSGKSKGFGFVSFDSHEAAKKAVEEMNGRDINGQLIFVGRAQKKVERQAELKQMFEQLKRERIRGCQGVKLYIKNLDDTIDDEKLRNEFSSFGSISRVKVMQEEGQSKGFGLICFSSPEDATKAMTEMNGRILGSKPLSIALAQRH.

RRM domains follow at residues 10-88, 98-174, 190-267, and 293-369; these read ASLY…WSQR, GNVF…RFKN, TNVY…RAQK, and VKLY…LAQR.

This sequence belongs to the polyadenylate-binding protein type-1 family.

Functionally, may bind RNA. This Homo sapiens (Human) protein is Polyadenylate-binding protein 4-like (PABPC4L).